Here is a 106-residue protein sequence, read N- to C-terminus: MVIRVFLASSSSSVTIKKRQQEVLQFLEANRIEYEEVDITMLEEKRQWMYKNIPKDRLPAQGNPLPPQIFNNNIYCGDYESFFESKESNTVLLFLQLKARPAQKEL.

Residues 61-67 carry the SH3-binding motif; it reads QGNPLPP.

This sequence belongs to the SH3BGR family.

It is found in the nucleus. In Xenopus laevis (African clawed frog), this protein is SH3 domain-binding glutamic acid-rich-like protein 2-B (sh3bgrl2-b).